The following is a 391-amino-acid chain: Imidazolonepropionase (391 aa).

Fe(3+)-binding residues include histidine 72 and histidine 74. Zn(2+) is bound by residues histidine 72 and histidine 74. Positions 81, 139, and 166 each coordinate 4-imidazolone-5-propanoate. Residue tyrosine 139 coordinates N-formimidoyl-L-glutamate. A Fe(3+)-binding site is contributed by histidine 229. A Zn(2+)-binding site is contributed by histidine 229. Glutamine 232 contributes to the 4-imidazolone-5-propanoate binding site. Residue aspartate 303 participates in Fe(3+) binding. Aspartate 303 is a binding site for Zn(2+). N-formimidoyl-L-glutamate is bound by residues asparagine 305 and glycine 307. Serine 308 is a binding site for 4-imidazolone-5-propanoate.

The protein belongs to the metallo-dependent hydrolases superfamily. HutI family. Zn(2+) serves as cofactor. The cofactor is Fe(3+).

It localises to the cytoplasm. The enzyme catalyses 4-imidazolone-5-propanoate + H2O = N-formimidoyl-L-glutamate. Its pathway is amino-acid degradation; L-histidine degradation into L-glutamate; N-formimidoyl-L-glutamate from L-histidine: step 3/3. Catalyzes the hydrolytic cleavage of the carbon-nitrogen bond in imidazolone-5-propanoate to yield N-formimidoyl-L-glutamate. It is the third step in the universal histidine degradation pathway. This is Imidazolonepropionase from Streptomyces coelicolor (strain ATCC BAA-471 / A3(2) / M145).